The chain runs to 218 residues: Cytochrome b6 (218 aa).

Residues 35–55 traverse the membrane as a helical segment; the sequence is IFYCLGGITLVCFLIQFATGF. A heme c-binding site is contributed by Cys38. Heme b-binding residues include His89 and His103. 3 helical membrane-spanning segments follow: residues 93-113, 119-139, and 189-209; these read ASMMVLMLILHVFRVYLTGGF, LTWVTGVTMAVITVSFGVTGY, and LHTFVMPWLLAVFMLMHFLMI. The heme b site is built by His190 and His205.

It belongs to the cytochrome b family. PetB subfamily. In terms of assembly, the 4 large subunits of the cytochrome b6-f complex are cytochrome b6, subunit IV (17 kDa polypeptide, PetD), cytochrome f and the Rieske protein, while the 4 small subunits are PetG, PetL, PetM and PetN. The complex functions as a dimer. Requires heme b as cofactor. Heme c serves as cofactor.

Its subcellular location is the cellular thylakoid membrane. Component of the cytochrome b6-f complex, which mediates electron transfer between photosystem II (PSII) and photosystem I (PSI), cyclic electron flow around PSI, and state transitions. The polypeptide is Cytochrome b6 (Synechococcus sp. (strain CC9605)).